The chain runs to 86 residues: Small ribosomal subunit protein uS17 (86 aa).

The protein belongs to the universal ribosomal protein uS17 family. As to quaternary structure, part of the 30S ribosomal subunit.

Functionally, one of the primary rRNA binding proteins, it binds specifically to the 5'-end of 16S ribosomal RNA. This Chlamydia pneumoniae (Chlamydophila pneumoniae) protein is Small ribosomal subunit protein uS17.